A 360-amino-acid chain; its full sequence is Phosphoserine aminotransferase (360 aa).

Arginine 42 provides a ligand contact to L-glutamate. Tryptophan 102, threonine 152, aspartate 171, and glutamine 194 together coordinate pyridoxal 5'-phosphate. An N6-(pyridoxal phosphate)lysine modification is found at lysine 195. 237–238 is a pyridoxal 5'-phosphate binding site; the sequence is NT.

Belongs to the class-V pyridoxal-phosphate-dependent aminotransferase family. SerC subfamily. Homodimer. The cofactor is pyridoxal 5'-phosphate.

It is found in the cytoplasm. The catalysed reaction is O-phospho-L-serine + 2-oxoglutarate = 3-phosphooxypyruvate + L-glutamate. It catalyses the reaction 4-(phosphooxy)-L-threonine + 2-oxoglutarate = (R)-3-hydroxy-2-oxo-4-phosphooxybutanoate + L-glutamate. It participates in amino-acid biosynthesis; L-serine biosynthesis; L-serine from 3-phospho-D-glycerate: step 2/3. Its pathway is cofactor biosynthesis; pyridoxine 5'-phosphate biosynthesis; pyridoxine 5'-phosphate from D-erythrose 4-phosphate: step 3/5. Its function is as follows. Catalyzes the reversible conversion of 3-phosphohydroxypyruvate to phosphoserine and of 3-hydroxy-2-oxo-4-phosphonooxybutanoate to phosphohydroxythreonine. This Coxiella burnetii (strain RSA 493 / Nine Mile phase I) protein is Phosphoserine aminotransferase.